We begin with the raw amino-acid sequence, 88 residues long: Large ribosomal subunit protein bL27 (88 aa).

Residues 1-13 (MATKKGASSSSNG) are compositionally biased toward polar residues. Residues 1-23 (MATKKGASSSSNGRDSEAKRLGV) are disordered.

This sequence belongs to the bacterial ribosomal protein bL27 family.

This is Large ribosomal subunit protein bL27 from Corynebacterium urealyticum (strain ATCC 43042 / DSM 7109).